A 135-amino-acid chain; its full sequence is Membrane-anchored ubiquitin-fold protein 4 (135 aa).

Positions 1-20 (MAEKEEGKVAAEGGAEAEAD) are disordered. Positions 23–92 (VEVKFRLFDG…NDKNIAQCRA (70 aa)) constitute a Ubiquitin-like domain. C132 bears the Cysteine methyl ester mark. The S-geranylgeranyl cysteine moiety is linked to residue C132. Positions 133-135 (TIL) are cleaved as a propeptide — removed in mature form.

The protein resides in the cell membrane. In terms of biological role, may serve as docking site to facilitate the association of other proteins to the plasma membrane. The polypeptide is Membrane-anchored ubiquitin-fold protein 4 (MUB4) (Oryza sativa subsp. japonica (Rice)).